Consider the following 599-residue polypeptide: Aspartate--tRNA(Asp/Asn) ligase (599 aa).

E174 lines the L-aspartate pocket. An aspartate region spans residues 198–201 (QLFK). Position 220 (R220) interacts with L-aspartate. ATP contacts are provided by residues 220-222 (RDE) and Q229. H457 lines the L-aspartate pocket. E491 serves as a coordination point for ATP. An L-aspartate-binding site is contributed by R498. 543–546 (GLDR) contacts ATP.

It belongs to the class-II aminoacyl-tRNA synthetase family. Type 1 subfamily. As to quaternary structure, homodimer.

It is found in the cytoplasm. It catalyses the reaction tRNA(Asx) + L-aspartate + ATP = L-aspartyl-tRNA(Asx) + AMP + diphosphate. Aspartyl-tRNA synthetase with relaxed tRNA specificity since it is able to aspartylate not only its cognate tRNA(Asp) but also tRNA(Asn). Reaction proceeds in two steps: L-aspartate is first activated by ATP to form Asp-AMP and then transferred to the acceptor end of tRNA(Asp/Asn). The polypeptide is Aspartate--tRNA(Asp/Asn) ligase (Paraburkholderia phymatum (strain DSM 17167 / CIP 108236 / LMG 21445 / STM815) (Burkholderia phymatum)).